Consider the following 541-residue polypeptide: Arginine--tRNA ligase (541 aa).

Residues 119–129 carry the 'HIGH' region motif; it reads ANPTGPLHIGH.

This sequence belongs to the class-I aminoacyl-tRNA synthetase family. As to quaternary structure, monomer.

The protein resides in the cytoplasm. It catalyses the reaction tRNA(Arg) + L-arginine + ATP = L-arginyl-tRNA(Arg) + AMP + diphosphate. In Helicobacter pylori (strain HPAG1), this protein is Arginine--tRNA ligase.